The primary structure comprises 113 residues: Tubulin-specific chaperone A (113 aa).

This sequence belongs to the TBCA family. In terms of assembly, supercomplex made of cofactors A to E. Cofactors A and D function by capturing and stabilizing tubulin in a quasi-native conformation. Cofactor E binds to the cofactor D-tubulin complex; interaction with cofactor C then causes the release of tubulin polypeptides that are committed to the native state.

Its subcellular location is the cytoplasm. The protein localises to the cytoskeleton. Functionally, tubulin-folding protein; involved in the early step of the tubulin folding pathway. The sequence is that of Tubulin-specific chaperone A (tbca) from Dictyostelium discoideum (Social amoeba).